We begin with the raw amino-acid sequence, 151 residues long: MQVILLEKIAKLGSLGSIVNVKPGYARNYLIPQGKARRVTEKVIAEFEAQRAELEKKQSEILAAASAQAARLDGLLVQISQKAGVDGKLFGSVTSANITEELRKQDFPVEKSMIRMPEGQIKQIGDYTVTVVLHSEVSAHITVSVLGETTI.

The protein belongs to the bacterial ribosomal protein bL9 family.

In terms of biological role, binds to the 23S rRNA. This chain is Large ribosomal subunit protein bL9, found in Nitrosomonas europaea (strain ATCC 19718 / CIP 103999 / KCTC 2705 / NBRC 14298).